A 751-amino-acid chain; its full sequence is ABC transporter G family member 22 (751 aa).

The interval 26-81 (ADIRSPHGSMDANGVPATAPAAVGGGGTLSRKSSRRLMGMSPGRSSGAGTHIRKSR) is disordered. The 247-residue stretch at 157 to 403 (LKFRDVTYKV…FSSIGCSPLI (247 aa)) folds into the ABC transporter domain. Residue 197–204 (GPSGSGKT) coordinates ATP. Positions 498-707 (EQYCILFCRG…TYKLLLKVQY (210 aa)) constitute an ABC transmembrane type-2 domain. 6 helical membrane passes run 516–536 (FSWLRVTQVLSTAVILGLLWW), 552–572 (LLFFIAVFWGFFPVFTAIFAF), 602–622 (LPLDFILPSLFLLVVYFMTGL), 634–654 (LTVFLCIIAAQGLGLAIGAIL), 666–686 (VTVMTFMLAGGFFVKKVPVFI), and 722–742 (GLTEVAALVVMIFGYRLLAYL).

It belongs to the ABC transporter superfamily. ABCG family. Eye pigment precursor importer (TC 3.A.1.204) subfamily.

The protein resides in the membrane. This chain is ABC transporter G family member 22 (ABCG22), found in Arabidopsis thaliana (Mouse-ear cress).